The chain runs to 477 residues: Glycogen synthase (477 aa).

An ADP-alpha-D-glucose-binding site is contributed by Lys-15.

It belongs to the glycosyltransferase 1 family. Bacterial/plant glycogen synthase subfamily.

The enzyme catalyses [(1-&gt;4)-alpha-D-glucosyl](n) + ADP-alpha-D-glucose = [(1-&gt;4)-alpha-D-glucosyl](n+1) + ADP + H(+). Its pathway is glycan biosynthesis; glycogen biosynthesis. Its function is as follows. Synthesizes alpha-1,4-glucan chains using ADP-glucose. This is Glycogen synthase from Streptococcus pneumoniae (strain 70585).